Here is a 345-residue protein sequence, read N- to C-terminus: S-adenosylmethionine:tRNA ribosyltransferase-isomerase (345 aa).

The protein belongs to the QueA family. As to quaternary structure, monomer.

Its subcellular location is the cytoplasm. The catalysed reaction is 7-aminomethyl-7-carbaguanosine(34) in tRNA + S-adenosyl-L-methionine = epoxyqueuosine(34) in tRNA + adenine + L-methionine + 2 H(+). It functions in the pathway tRNA modification; tRNA-queuosine biosynthesis. Functionally, transfers and isomerizes the ribose moiety from AdoMet to the 7-aminomethyl group of 7-deazaguanine (preQ1-tRNA) to give epoxyqueuosine (oQ-tRNA). The polypeptide is S-adenosylmethionine:tRNA ribosyltransferase-isomerase (Shewanella oneidensis (strain ATCC 700550 / JCM 31522 / CIP 106686 / LMG 19005 / NCIMB 14063 / MR-1)).